Reading from the N-terminus, the 456-residue chain is Hydroxyproline dehydrogenase (456 aa).

N6-acetyllysine is present on residues K310 and K320.

The protein belongs to the proline oxidase family. Requires FAD as cofactor.

It catalyses the reaction trans-4-hydroxy-L-proline + a quinone = (3R,5S)-1-pyrroline-3-hydroxy-5-carboxylate + a quinol + H(+). The enzyme catalyses L-proline + a quinone = (S)-1-pyrroline-5-carboxylate + a quinol + H(+). Dehydrogenase that converts trans-4-L-hydroxyproline to delta-1-pyrroline-3-hydroxy-5-carboxylate (Hyp) using ubiquinone-10 as the terminal electron acceptor. Can also use proline as a substrate but with a very much lower efficiency. Does not react with other diastereomers of Hyp: trans-4-D-hydroxyproline and cis-4-L-hydroxyproline. Ubiquininone analogs such as menadione, duroquinone and ubiquinone-1 react more efficiently than oxygen as the terminal electron acceptor during catalysis. This Rattus norvegicus (Rat) protein is Hydroxyproline dehydrogenase.